The chain runs to 297 residues: Alarmin release inhibitor (297 aa).

N-linked (GlcNAc...) asparagine glycosylation is found at asparagine 107, asparagine 175, and asparagine 190. The Sushi domain maps to 151–211; sequence TYDPTPNTPT…WVPTLGVCPK (61 aa). Cysteine 183 and cysteine 209 are disulfide-bonded.

Interacts with mouse IL33 (in reduced form).

It localises to the secreted. The protein localises to the host nucleus. In terms of biological role, secreted protein which suppresses the host allergic response by inhibiting the interaction of host IL33 with its receptor in order to maintain parasitic infection. Binds to both host IL33 and host nuclear DNA and this dual binding blocks the interaction of IL33 with its receptor, and tethers IL33 within necrotic cells, preventing its release, and blocking allergic response initiation. In Heligmosomoides polygyrus (Parasitic roundworm), this protein is Alarmin release inhibitor.